A 1499-amino-acid chain; its full sequence is DNA-directed RNA polymerase subunit beta' (1499 aa).

Zn(2+) is bound by residues Cys-67, Cys-69, Cys-82, and Cys-85. The Mg(2+) site is built by Asp-499, Asp-501, and Asp-503. Residues Cys-867, Cys-943, Cys-950, and Cys-953 each coordinate Zn(2+).

The protein belongs to the RNA polymerase beta' chain family. In terms of assembly, the RNAP catalytic core consists of 2 alpha, 1 beta, 1 beta' and 1 omega subunit. When a sigma factor is associated with the core the holoenzyme is formed, which can initiate transcription. It depends on Mg(2+) as a cofactor. Zn(2+) is required as a cofactor.

The enzyme catalyses RNA(n) + a ribonucleoside 5'-triphosphate = RNA(n+1) + diphosphate. Its function is as follows. DNA-dependent RNA polymerase catalyzes the transcription of DNA into RNA using the four ribonucleoside triphosphates as substrates. The chain is DNA-directed RNA polymerase subunit beta' from Prosthecochloris aestuarii (strain DSM 271 / SK 413).